Reading from the N-terminus, the 89-residue chain is UPF0237 protein lin0537 (89 aa).

The ACT domain maps to 4-78 (VLTVIGKDNV…EELQVKIHIQ (75 aa)).

Belongs to the UPF0237 family.

This Listeria innocua serovar 6a (strain ATCC BAA-680 / CLIP 11262) protein is UPF0237 protein lin0537.